We begin with the raw amino-acid sequence, 362 residues long: Exopolygalacturonase (362 aa).

4 PbH1 repeats span residues 138-164 (CKNLTFERFKISAAETSINTDGIHIGR), 165-186 (SDGVNIINTEIKTGDDCISLGD), 188-208 (SKNINITNITCGPGHGISVGS), and 218-239 (VVGIYVKNCTITGSQNGVRIKT). An N-linked (GlcNAc...) asparagine glycan is attached at Asn140. The active-site Proton donor is Asp179. 2 N-linked (GlcNAc...) asparagine glycosylation sites follow: Asn192 and Asn195. His202 is an active-site residue. Asn225 is a glycosylation site (N-linked (GlcNAc...) asparagine).

The protein belongs to the glycosyl hydrolase 28 family. Pollen tubes growing through the style during pollination.

Its subcellular location is the secreted. It localises to the cell wall. It carries out the reaction [(1-&gt;4)-alpha-D-galacturonosyl](n) + H2O = alpha-D-galacturonate + [(1-&gt;4)-alpha-D-galacturonosyl](n-1). Functionally, may function in depolymerizing pectin during pollen development, germination, and tube growth. Acts as an exo-polygalacturonase. This is Exopolygalacturonase from Oenothera organensis (Evening primrose).